The following is a 211-amino-acid chain: Protein-L-isoaspartate O-methyltransferase (211 aa).

Ser62 is a catalytic residue.

This sequence belongs to the methyltransferase superfamily. L-isoaspartyl/D-aspartyl protein methyltransferase family.

It localises to the cytoplasm. The catalysed reaction is [protein]-L-isoaspartate + S-adenosyl-L-methionine = [protein]-L-isoaspartate alpha-methyl ester + S-adenosyl-L-homocysteine. In terms of biological role, catalyzes the methyl esterification of L-isoaspartyl residues in peptides and proteins that result from spontaneous decomposition of normal L-aspartyl and L-asparaginyl residues. It plays a role in the repair and/or degradation of damaged proteins. This Shewanella frigidimarina (strain NCIMB 400) protein is Protein-L-isoaspartate O-methyltransferase.